Reading from the N-terminus, the 399-residue chain is uncharacterized protein (399 aa).

Transmembrane regions (helical) follow at residues histidine 6 to proline 26, lysine 27 to leucine 47, leucine 60 to aspartate 80, isoleucine 111 to phenylalanine 131, methionine 147 to isoleucine 167, serine 173 to alanine 193, glycine 195 to isoleucine 215, isoleucine 220 to phenylalanine 240, glycine 328 to lysine 348, and isoleucine 362 to alanine 382.

Its subcellular location is the cell membrane. This is an uncharacterized protein from Haemophilus influenzae (strain ATCC 51907 / DSM 11121 / KW20 / Rd).